A 159-amino-acid chain; its full sequence is Phosphopantetheine adenylyltransferase (159 aa).

Residue T9 coordinates substrate. Residues 9–10 (TF) and H17 contribute to the ATP site. Residues K41, L73, and R87 each contribute to the substrate site. ATP contacts are provided by residues 88–90 (GLR), E98, and 123–129 (YAFLSST).

It belongs to the bacterial CoaD family. As to quaternary structure, homohexamer. Mg(2+) is required as a cofactor.

The protein resides in the cytoplasm. It carries out the reaction (R)-4'-phosphopantetheine + ATP + H(+) = 3'-dephospho-CoA + diphosphate. It participates in cofactor biosynthesis; coenzyme A biosynthesis; CoA from (R)-pantothenate: step 4/5. Reversibly transfers an adenylyl group from ATP to 4'-phosphopantetheine, yielding dephospho-CoA (dPCoA) and pyrophosphate. This Vibrio campbellii (strain ATCC BAA-1116) protein is Phosphopantetheine adenylyltransferase.